Consider the following 245-residue polypeptide: Ubiquinone biosynthesis O-methyltransferase (245 aa).

S-adenosyl-L-methionine contacts are provided by Arg-49, Gly-69, Asp-90, and Met-134.

The protein belongs to the methyltransferase superfamily. UbiG/COQ3 family.

The enzyme catalyses a 3-demethylubiquinol + S-adenosyl-L-methionine = a ubiquinol + S-adenosyl-L-homocysteine + H(+). It catalyses the reaction a 3-(all-trans-polyprenyl)benzene-1,2-diol + S-adenosyl-L-methionine = a 2-methoxy-6-(all-trans-polyprenyl)phenol + S-adenosyl-L-homocysteine + H(+). It participates in cofactor biosynthesis; ubiquinone biosynthesis. In terms of biological role, O-methyltransferase that catalyzes the 2 O-methylation steps in the ubiquinone biosynthetic pathway. The chain is Ubiquinone biosynthesis O-methyltransferase from Vibrio cholerae serotype O1 (strain ATCC 39541 / Classical Ogawa 395 / O395).